The primary structure comprises 471 residues: MAPADGESSPPPHVAVVAFPFSSHAAVLLSIARALAAAAAPSGATLSFLSTASSLAQLRKASSASAGHGLPGNLRFVEVPDGAPAAEESVPVPRQMQLFMEAAEAGGVKAWLEAARAAAGGARVTCVVGDAFVWPAADAAASAGAPWVPVWTAASCALLAHIRTDALREDVGDQAANRVDEPLISHPGLASYRVRDLPDGVVSGDFNYVINLLVHRMGQCLPRSAAAVALNTFPGLDPPDVTAALAEILPNCVPFGPYHLLLAEDDADTAAPADPHGCLAWLGRQPARGVAYVSFGTVACPRPDELRELAAGLEASGAPFLWSLREDSWTLLPPGFLDRAAGTGSGLVVPWAPQVAVLRHPSVGAFVTHAGWASVLEGVSSGVPMACRPFFGDQRMNARSVAHVWGFGAAFEGAMTSAGVAAAVEELLRGEEGARMRARAKVLQALVAEAFGPGGECRKNFDRFVEIVCRA.

His24 functions as the Proton acceptor in the catalytic mechanism. Position 24 (His24) interacts with an anthocyanidin. The active-site Charge relay is Asp130. Thr152 serves as a coordination point for UDP-alpha-D-glucose. His161 is a binding site for an anthocyanidin. UDP-alpha-D-glucose contacts are provided by Ala352, Gln354, His369, Trp372, Ser374, and Glu377. Residue Gly392 coordinates an anthocyanidin. Positions 393 and 394 each coordinate UDP-alpha-D-glucose.

It belongs to the UDP-glycosyltransferase family.

It carries out the reaction an anthocyanidin + UDP-alpha-D-glucose + H(+) = an anthocyanidin 3-O-beta-D-glucoside + UDP. Its pathway is pigment biosynthesis; anthocyanin biosynthesis. In terms of biological role, in the presence of other necessary color factors, this glycosylation reaction allows the accumulation of anthocyanin pigments. This Zea mays (Maize) protein is Anthocyanidin 3-O-glucosyltransferase (BZ1).